A 188-amino-acid chain; its full sequence is dCTP deaminase (188 aa).

DCTP contacts are provided by residues 111-116 (KSTYAR), 135-137 (TLE), glutamine 156, tyrosine 170, and glutamine 180. The active-site Proton donor/acceptor is the glutamate 137.

The protein belongs to the dCTP deaminase family. As to quaternary structure, homotrimer.

It catalyses the reaction dCTP + H2O + H(+) = dUTP + NH4(+). It functions in the pathway pyrimidine metabolism; dUMP biosynthesis; dUMP from dCTP (dUTP route): step 1/2. Functionally, catalyzes the deamination of dCTP to dUTP. This chain is dCTP deaminase, found in Pseudomonas fluorescens (strain SBW25).